Consider the following 353-residue polypeptide: tRNA N6-adenosine threonylcarbamoyltransferase (353 aa).

The Fe cation site is built by histidine 111 and histidine 115. Substrate is bound by residues 148 to 152, aspartate 181, glycine 194, and asparagine 286; that span reads LVSGG. Aspartate 314 serves as a coordination point for Fe cation.

Belongs to the KAE1 / TsaD family. Requires Fe(2+) as cofactor.

Its subcellular location is the cytoplasm. It carries out the reaction L-threonylcarbamoyladenylate + adenosine(37) in tRNA = N(6)-L-threonylcarbamoyladenosine(37) in tRNA + AMP + H(+). Required for the formation of a threonylcarbamoyl group on adenosine at position 37 (t(6)A37) in tRNAs that read codons beginning with adenine. Is involved in the transfer of the threonylcarbamoyl moiety of threonylcarbamoyl-AMP (TC-AMP) to the N6 group of A37, together with TsaE and TsaB. TsaD likely plays a direct catalytic role in this reaction. The polypeptide is tRNA N6-adenosine threonylcarbamoyltransferase (Blochmanniella floridana).